The chain runs to 175 residues: NADH-ubiquinone oxidoreductase chain 6 (175 aa).

5 consecutive transmembrane segments (helical) span residues 1 to 21 (MVTY…VGVS), 25 to 45 (SPIY…GVVL), 47 to 67 (FGGS…MLVV), 88 to 108 (VVLG…IYAL), and 149 to 169 (YGVW…VIIM).

The protein belongs to the complex I subunit 6 family. As to quaternary structure, core subunit of respiratory chain NADH dehydrogenase (Complex I) which is composed of 45 different subunits.

The protein localises to the mitochondrion inner membrane. It catalyses the reaction a ubiquinone + NADH + 5 H(+)(in) = a ubiquinol + NAD(+) + 4 H(+)(out). Its function is as follows. Core subunit of the mitochondrial membrane respiratory chain NADH dehydrogenase (Complex I) which catalyzes electron transfer from NADH through the respiratory chain, using ubiquinone as an electron acceptor. Essential for the catalytic activity and assembly of complex I. This Balaenoptera musculus (Blue whale) protein is NADH-ubiquinone oxidoreductase chain 6 (MT-ND6).